Here is a 1513-residue protein sequence, read N- to C-terminus: Exo-beta-1,6-galactobiohydrolase (1513 aa).

The N-terminal stretch at 1–31 is a signal peptide; it reads MRVLSKSLAAMVAAATLVGGGAFAVAGTAYA. In terms of domain architecture, Ricin B-type lectin spans 666–801; sequence VADTTSGDSA…PSANQTWTLR (136 aa). 2 consecutive F5/8 type C domains span residues 965-1112 and 1116-1273; these read AIYV…AFVT and GAAK…VFAQ. Positions 1456 to 1480 are disordered; the sequence is VAPGPEEQKPGNTNKPGATGNGNKN. The segment covering 1465 to 1480 has biased composition (polar residues); that stretch reads PGNTNKPGATGNGNKN. A helical membrane pass occupies residues 1489–1509; sequence VAAIAGAVALLAAAAGALFML.

The protein belongs to the glycosyl hydrolase 30 family.

Its subcellular location is the cell membrane. The enzyme catalyses Hydrolysis of (1-&gt;6)-beta-D-galactosidic linkages in arabinogalactan proteins and (1-&gt;3):(1-&gt;6)-beta-galactans to yield (1-&gt;6)-beta-galactobiose as the final product.. Functionally, involved in the type II arabinogalactan (AG) side chains degradation. Specifically releases the non-reducing terminal beta-1,6-galactobiose (beta-1,6-Gal2) from both dearabinosylated larch AG and polymeric beta-1,6-galactan chains by an exo-mode of action. Shows lower activity with larch AG, and very weak activity with dearabinosylated gum arabic, gum arabic and potato galactan. Can probably release beta-1,6-Gal2 from the internal side chains of type II AG. This is Exo-beta-1,6-galactobiohydrolase from Bifidobacterium longum subsp. longum (strain ATCC 15707 / DSM 20219 / JCM 1217 / NCTC 11818 / E194b).